The primary structure comprises 900 residues: Phosphoenolpyruvate carboxylase (900 aa).

Active-site residues include His-140 and Lys-568.

Belongs to the PEPCase type 1 family. It depends on Mg(2+) as a cofactor.

It carries out the reaction oxaloacetate + phosphate = phosphoenolpyruvate + hydrogencarbonate. Its function is as follows. Forms oxaloacetate, a four-carbon dicarboxylic acid source for the tricarboxylic acid cycle. In Neisseria meningitidis serogroup A / serotype 4A (strain DSM 15465 / Z2491), this protein is Phosphoenolpyruvate carboxylase.